The sequence spans 250 residues: 1-(5-phosphoribosyl)-5-[(5-phosphoribosylamino)methylideneamino] imidazole-4-carboxamide isomerase (250 aa).

Aspartate 12 serves as the catalytic Proton acceptor. The active-site Proton donor is aspartate 134.

Belongs to the HisA/HisF family.

It is found in the cytoplasm. It carries out the reaction 1-(5-phospho-beta-D-ribosyl)-5-[(5-phospho-beta-D-ribosylamino)methylideneamino]imidazole-4-carboxamide = 5-[(5-phospho-1-deoxy-D-ribulos-1-ylimino)methylamino]-1-(5-phospho-beta-D-ribosyl)imidazole-4-carboxamide. Its pathway is amino-acid biosynthesis; L-histidine biosynthesis; L-histidine from 5-phospho-alpha-D-ribose 1-diphosphate: step 4/9. The chain is 1-(5-phosphoribosyl)-5-[(5-phosphoribosylamino)methylideneamino] imidazole-4-carboxamide isomerase from Actinobacillus pleuropneumoniae serotype 5b (strain L20).